We begin with the raw amino-acid sequence, 383 residues long: 8-amino-7-oxononanoate synthase (383 aa).

Substrate is bound at residue Arg21. Pyridoxal 5'-phosphate is bound at residue Gly108–Tyr109. His133 contacts substrate. Pyridoxal 5'-phosphate is bound by residues Ser179, His207, and Thr233. The residue at position 236 (Lys236) is an N6-(pyridoxal phosphate)lysine. Thr350 provides a ligand contact to substrate.

It belongs to the class-II pyridoxal-phosphate-dependent aminotransferase family. BioF subfamily. As to quaternary structure, homodimer. Pyridoxal 5'-phosphate serves as cofactor.

The enzyme catalyses 6-carboxyhexanoyl-[ACP] + L-alanine + H(+) = (8S)-8-amino-7-oxononanoate + holo-[ACP] + CO2. Its pathway is cofactor biosynthesis; biotin biosynthesis. In terms of biological role, catalyzes the decarboxylative condensation of pimeloyl-[acyl-carrier protein] and L-alanine to produce 8-amino-7-oxononanoate (AON), [acyl-carrier protein], and carbon dioxide. The protein is 8-amino-7-oxononanoate synthase of Yersinia pseudotuberculosis serotype IB (strain PB1/+).